A 141-amino-acid polypeptide reads, in one-letter code: Nucleoside diphosphate kinase (141 aa).

ATP is bound by residues K11, F59, R87, T93, R104, and N114. H117 serves as the catalytic Pros-phosphohistidine intermediate.

Belongs to the NDK family. Homotetramer. It depends on Mg(2+) as a cofactor.

The protein localises to the cytoplasm. It catalyses the reaction a 2'-deoxyribonucleoside 5'-diphosphate + ATP = a 2'-deoxyribonucleoside 5'-triphosphate + ADP. It carries out the reaction a ribonucleoside 5'-diphosphate + ATP = a ribonucleoside 5'-triphosphate + ADP. Its function is as follows. Major role in the synthesis of nucleoside triphosphates other than ATP. The ATP gamma phosphate is transferred to the NDP beta phosphate via a ping-pong mechanism, using a phosphorylated active-site intermediate. This Nitrosomonas europaea (strain ATCC 19718 / CIP 103999 / KCTC 2705 / NBRC 14298) protein is Nucleoside diphosphate kinase.